The primary structure comprises 159 residues: Cyclic pyranopterin monophosphate synthase (159 aa).

Residues 75–77 (MCH) and 113–114 (ME) each bind substrate. Asp128 is a catalytic residue.

The protein belongs to the MoaC family. In terms of assembly, homohexamer; trimer of dimers.

The enzyme catalyses (8S)-3',8-cyclo-7,8-dihydroguanosine 5'-triphosphate = cyclic pyranopterin phosphate + diphosphate. The protein operates within cofactor biosynthesis; molybdopterin biosynthesis. Its function is as follows. Catalyzes the conversion of (8S)-3',8-cyclo-7,8-dihydroguanosine 5'-triphosphate to cyclic pyranopterin monophosphate (cPMP). The protein is Cyclic pyranopterin monophosphate synthase of Desulfatibacillum aliphaticivorans.